We begin with the raw amino-acid sequence, 508 residues long: Photosystem II CP47 reaction center protein (508 aa).

The next 6 helical transmembrane spans lie at 21-36 (AVHI…WAGS), 101-115 (IVFS…IWHW), 140-156 (GIHL…FGAF), 203-218 (IAAG…FHLS), 237-252 (VLSS…AFIV), and 457-472 (TFAL…HGAR).

Belongs to the PsbB/PsbC family. PsbB subfamily. As to quaternary structure, PSII is composed of 1 copy each of membrane proteins PsbA, PsbB, PsbC, PsbD, PsbE, PsbF, PsbH, PsbI, PsbJ, PsbK, PsbL, PsbM, PsbT, PsbX, PsbY, PsbZ, Psb30/Ycf12, at least 3 peripheral proteins of the oxygen-evolving complex and a large number of cofactors. It forms dimeric complexes. Requires Binds multiple chlorophylls. PSII binds additional chlorophylls, carotenoids and specific lipids. as cofactor.

The protein localises to the plastid. It localises to the chloroplast thylakoid membrane. Its function is as follows. One of the components of the core complex of photosystem II (PSII). It binds chlorophyll and helps catalyze the primary light-induced photochemical processes of PSII. PSII is a light-driven water:plastoquinone oxidoreductase, using light energy to abstract electrons from H(2)O, generating O(2) and a proton gradient subsequently used for ATP formation. The chain is Photosystem II CP47 reaction center protein from Cryptomeria japonica (Japanese cedar).